Consider the following 1382-residue polypeptide: Histone-lysine N-methyltransferase SUVR5 (1382 aa).

2 disordered regions span residues 43–62 (TVTG…SEPK) and 354–373 (GNTN…NTPE). 3 consecutive C2H2-type zinc fingers follow at residues 735-758 (FACA…EERH), 769-792 (LQCI…QAVH), and 838-861 (FVCK…QAEH). A disordered region spans residues 915-935 (RRMQGSKSLGTEGNTEAGVSP). Residues 919–928 (GSKSLGTEGN) are compositionally biased toward polar residues. Residues 1145–1221 (LRCSCRSSVC…TCQNRVLQNG (77 aa)) form the Pre-SET domain. Zn(2+) contacts are provided by Cys-1147, Cys-1149, Cys-1154, Cys-1159, Cys-1182, Cys-1203, Cys-1207, Cys-1209, and Cys-1213. An SET domain is found at 1224–1356 (AKLEVFRTES…AGEEITRDYG (133 aa)). Residues 1234-1236 (KGW), Tyr-1277, and 1313-1314 (NH) contribute to the S-adenosyl-L-methionine site. Cys-1316 contacts Zn(2+). Residue Tyr-1355 coordinates S-adenosyl-L-methionine. The Post-SET domain occupies 1366–1382 (NEHPCHCKATNCRGLLS). Positions 1370, 1372, and 1377 each coordinate Zn(2+).

Belongs to the class V-like SAM-binding methyltransferase superfamily. Component of a regulatory complex with LDL1/SWP1. Interacts with LDL1/SWP1.

It localises to the nucleus. The protein localises to the chromosome. The catalysed reaction is L-lysyl-[histone] + S-adenosyl-L-methionine = N(6)-methyl-L-lysyl-[histone] + S-adenosyl-L-homocysteine + H(+). Its function is as follows. Histone methyltransferase that functions together with its binding partner LDL1/SWP1 as one of the regulators of flower timing in Arabidopsis. Mediates H3K9me2 deposition and regulates gene expression in a DNA methylation-independent manner. Binds DNA through its zinc fingers and represses the expression of a subset of stimulus response genes. May represent a novel mechanism for plants to regulate their chromatin and transcriptional state, which may allow for the adaptability and modulation necessary to rapidly respond to environment or developmental cues. The chain is Histone-lysine N-methyltransferase SUVR5 from Arabidopsis thaliana (Mouse-ear cress).